The primary structure comprises 31 residues: Cliotide T14 (31 aa).

The segment at residues 1 to 31 is a cross-link (cyclopeptide (Asp-Asn)); it reads DTIPCGESCVWIPCISSILGCSCKDKVCYHN. Disulfide bonds link Cys-5–Cys-21, Cys-9–Cys-23, and Cys-14–Cys-28.

Contains 3 disulfide bonds. Post-translationally, this is a cyclic peptide. As to expression, expressed in seed but not in root nodules.

Probably participates in a plant defense mechanism. Not active against Gram-negative bacterium E.coli ATCC 700926 or Gram-positive bacterium S.aureus ATCC 12600 up to a concentration of 100 uM under low-salt conditions. In Clitoria ternatea (Butterfly pea), this protein is Cliotide T14.